Consider the following 275-residue polypeptide: MDIDIVSVFPEYFDVLNLSLLGKAQERGLLAVRSHNLRQWTHDVHQSVDDTPVGGGAGMVMKPEVWAECLDELLGIPADAPANAHAAPAADSPVLIFPNPSAPLFTQQDATALSHAEHLVFGCGRYEGYDARIPQYYRERGVDVREYSIGDYVLNGGEVAVSVMLEAITRLLPGFMGNADSIVEESYTGENALLEHNQYTKPASWRGIDVPPVLISGDHGRVNRFRRDEALEKTSRLRPDLIARLDCHALDKQDRKTLMSLGWEVSGEHPRKLED.

S-adenosyl-L-methionine contacts are provided by residues Gly-124 and 149–154 (IGDYVL).

This sequence belongs to the RNA methyltransferase TrmD family. In terms of assembly, homodimer.

Its subcellular location is the cytoplasm. It carries out the reaction guanosine(37) in tRNA + S-adenosyl-L-methionine = N(1)-methylguanosine(37) in tRNA + S-adenosyl-L-homocysteine + H(+). In terms of biological role, specifically methylates guanosine-37 in various tRNAs. In Bifidobacterium animalis subsp. lactis (strain AD011), this protein is tRNA (guanine-N(1)-)-methyltransferase.